The sequence spans 460 residues: Malonyl-coenzyme A:anthocyanin 3-O-glucoside-6''-O-malonyltransferase (460 aa).

Catalysis depends on proton acceptor residues H173 and D400.

This sequence belongs to the plant acyltransferase family.

The enzyme catalyses an anthocyanidin 3-O-beta-D-glucoside + malonyl-CoA = an anthocyanidin 3-O-(6-O-malonyl-beta-D-glucoside) + CoA. Its activity is regulated as follows. Completely inhibited by 5 mM N-ethylmaleimide or 0.1 mM Cu(2+). Partially inhibited by 0.1 mM Fe(2+) or 0.1 mM Hg(2+). Functionally, catalyzes the transfer of the malonyl group from malonyl-CoA to pelargonidin 3-O-glucoside to produce pelargonidin 3-O-6''-O-malonylglucoside. Can also transfer the malonyl group from malonyl-CoA to cyanidin 3-O-glucoside, delphinidin 3-O-glucoside and quercetin 3-O-glucoside. This Dahlia pinnata (Pinnate dahlia) protein is Malonyl-coenzyme A:anthocyanin 3-O-glucoside-6''-O-malonyltransferase.